A 246-amino-acid polypeptide reads, in one-letter code: Biosynthetic peptidoglycan transglycosylase (246 aa).

Residues 20-42 traverse the membrane as a helical segment; sequence WLRWLMAAPLLFAAASVLQVLIL.

Belongs to the glycosyltransferase 51 family.

The protein localises to the cell inner membrane. The enzyme catalyses [GlcNAc-(1-&gt;4)-Mur2Ac(oyl-L-Ala-gamma-D-Glu-L-Lys-D-Ala-D-Ala)](n)-di-trans,octa-cis-undecaprenyl diphosphate + beta-D-GlcNAc-(1-&gt;4)-Mur2Ac(oyl-L-Ala-gamma-D-Glu-L-Lys-D-Ala-D-Ala)-di-trans,octa-cis-undecaprenyl diphosphate = [GlcNAc-(1-&gt;4)-Mur2Ac(oyl-L-Ala-gamma-D-Glu-L-Lys-D-Ala-D-Ala)](n+1)-di-trans,octa-cis-undecaprenyl diphosphate + di-trans,octa-cis-undecaprenyl diphosphate + H(+). The protein operates within cell wall biogenesis; peptidoglycan biosynthesis. In terms of biological role, peptidoglycan polymerase that catalyzes glycan chain elongation from lipid-linked precursors. In Xanthomonas axonopodis pv. citri (strain 306), this protein is Biosynthetic peptidoglycan transglycosylase.